A 337-amino-acid polypeptide reads, in one-letter code: Neurogenic differentiation factor 6 (337 aa).

Positions 43 to 82 are disordered; sequence LRGKSIKRAPGEETEKEEEEEDREEEDENGLPRRRGLRKK. A compositionally biased stretch (acidic residues) spans 54–71; that stretch reads EETEKEEEEEDREEEDEN. The Nuclear localization signal signature appears at 80–86; it reads RKKKTTK. Positions 94–146 constitute a bHLH domain; sequence FRRQEANARERNRMHGLNDALDNLRKVVPCYSKTQKLSKIETLRLAKNYIWAL.

As to quaternary structure, efficient DNA binding requires dimerization with another bHLH protein.

The protein resides in the nucleus. In terms of biological role, activates E box-dependent transcription in collaboration with TCF3/E47. May be a trans-acting factor involved in the development and maintenance of the mammalian nervous system. Transactivates the promoter of its own gene. The sequence is that of Neurogenic differentiation factor 6 (NEUROD6) from Bos taurus (Bovine).